Reading from the N-terminus, the 309-residue chain is Tagatose-6-phosphate kinase (309 aa).

Belongs to the carbohydrate kinase PfkB family. LacC subfamily.

It carries out the reaction D-tagatofuranose 6-phosphate + ATP = D-tagatofuranose 1,6-bisphosphate + ADP + H(+). It functions in the pathway carbohydrate metabolism; D-tagatose 6-phosphate degradation; D-glyceraldehyde 3-phosphate and glycerone phosphate from D-tagatose 6-phosphate: step 1/2. The protein is Tagatose-6-phosphate kinase of Streptococcus pneumoniae (strain Hungary19A-6).